The sequence spans 613 residues: Ribosome-associated molecular chaperone SSB (613 aa).

Residues 1-391 form a nucleotide binding domain (NBD) region; sequence MADGVFQGAI…ILTGQSTSDE (391 aa). Residues 16–18, Lys73, 205–207, 271–278, and Gly342 contribute to the ATP site; these read TTY, GGT, and ERAKRTLS. The interval 392–402 is inter-domain linker; that stretch reads TKDLLLLDVAP. The segment at 403-613 is substrate binding domain (SBD); the sequence is LSLGVGMQGD…RVVTKAMSSR (211 aa). A lid domain (SBDalpha) region spans residues 516-612; that stretch reads SEDIEKMVNQ…KRVVTKAMSS (97 aa). The Nuclear export signal motif lies at 574–582; the sequence is IEAALADAL.

Belongs to the heat shock protein 70 family. Ssb-type Hsp70 subfamily. In terms of assembly, binds to ribosomes. Binds close to the ribosomal tunnel exit via contacts with both ribosomal proteins and rRNA. Directly interacts with nascent polypeptides. This interaction is dependent on the ribosome-associated complex (RAC). Interacts with SSE1. Interacts with FES1.

It localises to the cytoplasm. It carries out the reaction ATP + H2O = ADP + phosphate + H(+). Ribosome-bound, Hsp70-type chaperone that assists in the cotranslational folding of newly synthesized proteins in the cytosol. Stimulates folding by interacting with nascent chains, binding to short, largely hydrophobic sequences exposed by unfolded proteins, thereby stabilizing longer, more slowly translated, and aggregation-prone nascent polypeptides and domains that cannot fold stably until fully synthesized. The Hsp70-protein substrate interaction depends on ATP-binding and on allosteric regulation between the NBD and the SBD. The ATP-bound state is characterized by a fast exchange rate of substrate (low affinity state), while in the ADP-bound state exchange is much slower (high affinity state). During the Hsp70 cycle, the chaperone switches between the ATP-bound state (open conformation) and the ADP-bound state (closed conformation) by major conformational rearrangements involving mainly the lid domain. Ssb cooperates with a specific Hsp40/Hsp70 co-chaperone termed the ribosome-associated complex (RAC), which stimulates the ATPase activity of the ribosome-associated pool of Ssbs and switches it to the high affinity substrate binding state. Hsp110 chaperone SSE1 and FES1 act as nucleotide exchange factors that cause substrate release. The chain is Ribosome-associated molecular chaperone SSB (SSB1) from Candida glabrata (strain ATCC 2001 / BCRC 20586 / JCM 3761 / NBRC 0622 / NRRL Y-65 / CBS 138) (Yeast).